Consider the following 1705-residue polypeptide: Clathrin heavy chain 1 (1705 aa).

Alanine 2 carries the post-translational modification N-acetylalanine. The segment at 2 to 492 is globular terminal domain; sequence AAANAPIIMK…VDNDLALKIY (491 aa). WD40-like repeat stretches follow at residues 25 to 67, 68 to 113, 114 to 155, 156 to 205, 206 to 270, 271 to 314, and 315 to 343; these read FITF…RPIT, ADSA…MPEQ, VAFW…ANLA, NNQI…QALE, AHAA…PDFA, DDFP…ISPD, and PIFL…ATVN. The binding site for the uncoating ATPase, involved in lattice disassembly stretch occupies residues 462–478; the sequence is ENWLAEDKLECSEELGD. Residues 493-536 are flexible linker; the sequence is IKARATPKVVAAFAERREFDKILIYSKQVGYTPDYMFLLQTILR. The interval 537 to 648 is distal segment; that stretch reads TDPQGAVNFA…QSLKHYSELP (112 aa). The tract at residues 537 to 1705 is heavy chain arm; it reads TDPQGAVNFA…PYGMPPMGGY (1169 aa). CHCR repeat units lie at residues 551 to 697, 700 to 842, 847 to 986, 993 to 1138, 1142 to 1283, 1288 to 1434, and 1437 to 1580; these read QMEG…QIIV, CKEY…PEDF, ILSV…QLID, LPES…VSDA, FIRA…FRLA, LNII…DIIN, and LNVL…KECF. Residues 653–1705 are proximal segment; that stretch reads VIVNTHAIEP…PYGMPPMGGY (1053 aa). The involved in binding clathrin light chain stretch occupies residues 1227–1536; it reads AAKIIYAFIS…YIYKKAGRWK (310 aa). The segment at 1564–1705 is trimerization; sequence AEQLLVYFIE…PYGMPPMGGY (142 aa).

The protein belongs to the clathrin heavy chain family. As to quaternary structure, clathrin triskelions, composed of 3 heavy chains and 3 light chains, are the basic subunits of the clathrin coat. Interacts with SCYL2B.

The protein localises to the cytoplasmic vesicle membrane. Its subcellular location is the membrane. It localises to the coated pit. Its function is as follows. Clathrin is the major protein of the polyhedral coat of coated pits and vesicles. Mediates endocytosis and is required for a correct polar distribution of PIN auxin transporters. This Arabidopsis thaliana (Mouse-ear cress) protein is Clathrin heavy chain 1.